Reading from the N-terminus, the 1244-residue chain is Structural polyprotein (1244 aa).

The segment at 1–113 is disordered; that stretch reads MNSVFYNPFG…GKRQRTALKF (113 aa). Polar residues predominate over residues 35 to 44; sequence GLTTQIQQLT. The segment at 35-69 is host transcription inhibition; that stretch reads GLTTQIQQLTRAVRALVLDNATRRQRPAPRTRPRK. Residues 57–81 show a composition bias toward basic residues; that stretch reads RRQRPAPRTRPRKPKTQKPKPKKQN. A Nuclear localization signal motif is present at residues 62–103; the sequence is APRTRPRKPKTQKPKPKKQNQKPPQQQKKGKNQPQQPKKPKP. Low complexity predominate over residues 82–97; it reads QKPPQQQKKGKNQPQQ. A binding to the viral RNA region spans residues 85–118; sequence PQQQKKGKNQPQQPKKPKPGKRQRTALKFEADRT. Residues 99-109 are compositionally biased toward basic residues; that stretch reads KKPKPGKRQRT. The tract at residues 103–117 is ribosome-binding; the sequence is PGKRQRTALKFEADR. The Peptidase S3 domain maps to 117–267; that stretch reads RTFVGKNEDG…KTTHEDTVEW (151 aa). The active-site Charge relay system is the His-144. Positions 149-159 match the Nuclear export signal motif; the sequence is IDHPALAKLKF. The interaction with spike glycoprotein E2 stretch occupies residues 160–165; that stretch reads TKSSSY. The Charge relay system role is filled by Asp-166. The segment at 188–198 is dimerization of the capsid protein; the sequence is PEVFYNWHHGA. The active-site Charge relay system is the Ser-218. Positions 224–228 are dimerization of the capsid protein; sequence DNSGK. An interaction with spike glycoprotein E2 region spans residues 252 to 256; it reads KKGAA. The segment at 268–280 is functions as an uncleaved signal peptide for the precursor of protein E3/E2; it reads SRAITAMCILQNV. Topologically, residues 268–696 are extracellular; the sequence is SRAITAMCIL…HYYHLYPFYT (429 aa). N-linked (GlcNAc...) asparagine; by host glycosylation occurs at Asn-279. Disulfide bonds link Cys-284-Cys-290, Cys-481-Cys-595, Cys-530-Cys-555, and Cys-532-Cys-549. An N-linked (GlcNAc...) asparagine; by host glycan is attached at Asn-525. Residue Asn-647 is glycosylated (N-linked (GlcNAc...) asparagine; by host). A helical transmembrane segment spans residues 697–717; the sequence is VTVLSGMGLAICAGLVISILC. Residues 718-751 are Cytoplasmic-facing; sequence CCKARRDCLTPYQLAPNATVPFLVTLCCCFQRTS. The tract at residues 720–724 is interaction with the capsid protein; that stretch reads KARRD. Residues Cys-725, Cys-745, and Cys-746 are each lipidated (S-palmitoyl cysteine; by host). Cys-725 and Cys-746 are oxidised to a cystine. At 752 to 764 the chain is on the extracellular side; sequence ADEFTDTMGYLWQ. 2 helical membrane passes run 765-785 and 786-805; these read HSQT…ITLV and RCCS…NKAD. The Extracellular segment spans residues 806-1218; sequence AYEHTITVPN…KTSWNWITAL (413 aa). Disulfide bonds link Cys-855–Cys-920, Cys-868–Cys-900, Cys-869–Cys-902, and Cys-874–Cys-884. An E1 fusion peptide loop region spans residues 890 to 907; the sequence is VYPFLWGGAQCFCDSENS. N-linked (GlcNAc...) asparagine; by host glycans are attached at residues Asn-945 and Asn-1051. 4 disulfide bridges follow: Cys-1065/Cys-1077, Cys-1106/Cys-1181, Cys-1111/Cys-1185, and Cys-1133/Cys-1175. A helical membrane pass occupies residues 1219–1239; it reads MGGISSIAAIAAIVLVIALVF. Over 1240 to 1244 the chain is Cytoplasmic; it reads TAQHR.

As to quaternary structure, homodimer. Homomultimer. Interacts with host karyopherin KPNA4; this interaction allows the nuclear import of the viral capsid protein. Interacts with spike glycoprotein E2. Interacts with host IRAK1; the interaction leads to inhibition of IRAK1-dependent signaling. In terms of assembly, the precursor of protein E3/E2 and E1 form a heterodimer shortly after synthesis. The precursor of protein E3/E2 and E1 form a heterodimer shortly after synthesis. Processing of the precursor of protein E3/E2 into E2 and E3 results in a heterodimer of the spike glycoproteins E2 and E1. Spike at virion surface are constituted of a trimer of E2-E1 heterodimers. After target cell attachment and endocytosis, E1 change conformation to form homotrimers. Interacts with 6K protein. As to quaternary structure, interacts with spike glycoprotein E1. Processing of the precursor of protein E3/E2 into E2 and E3 results in a heterodimer of the spike glycoproteins E2 and E1. Spike at virion surface are constituted of a trimer of E2-E1 heterodimers. Interacts with 6K protein. In terms of assembly, oligomer. Interacts with spike glycoprotein E1. Interacts with spike glycoprotein E2. Post-translationally, structural polyprotein: Specific enzymatic cleavages in vivo yield mature proteins. Capsid protein is auto-cleaved during polyprotein translation, unmasking a signal peptide at the N-terminus of the precursor of E3/E2. The remaining polyprotein is then targeted to the host endoplasmic reticulum, where host signal peptidase cleaves it into pE2, 6K and E1 proteins. pE2 is further processed to mature E3 and E2 by host furin in trans-Golgi vesicle. In terms of processing, palmitoylated via thioester bonds. These palmitoylations may induce disruption of the C-terminus transmembrane. This would result in the reorientation of E2 C-terminus from lumenal to cytoplasmic side. N-glycosylated. Post-translationally, palmitoylated via thioester bonds.

The protein resides in the virion. It is found in the host cytoplasm. It localises to the host cell membrane. The protein localises to the host nucleus. Its subcellular location is the virion membrane. The protein resides in the host Golgi apparatus. It is found in the host trans-Golgi network. It localises to the host endoplasmic reticulum. The catalysed reaction is Autocatalytic release of the core protein from the N-terminus of the togavirus structural polyprotein by hydrolysis of a -Trp-|-Ser- bond.. Functionally, forms an icosahedral capsid with a T=4 symmetry composed of 240 copies of the capsid protein surrounded by a lipid membrane through which penetrate 80 spikes composed of trimers of E1-E2 heterodimers. The capsid protein binds to the viral RNA genome at a site adjacent to a ribosome binding site for viral genome translation following genome release. Possesses a protease activity that results in its autocatalytic cleavage from the nascent structural protein. Following its self-cleavage, the capsid protein transiently associates with ribosomes, and within several minutes the protein binds to viral RNA and rapidly assembles into icosahedric core particles. The resulting nucleocapsid eventually associates with the cytoplasmic domain of the spike glycoprotein E2 at the cell membrane, leading to budding and formation of mature virions. In case of infection, new virions attach to target cells and after clathrin-mediated endocytosis their membrane fuses with the host endosomal membrane. This leads to the release of the nucleocapsid into the cytoplasm, followed by an uncoating event necessary for the genomic RNA to become accessible. The uncoating might be triggered by the interaction of capsid proteins with ribosomes. Binding of ribosomes would release the genomic RNA since the same region is genomic RNA-binding and ribosome-binding. Specifically inhibits interleukin-1 receptor-associated kinase 1/IRAK1-dependent signaling during viral entry, representing a means by which the alphaviruses may evade innate immune detection and activation prior to viral gene expression. Provides the signal sequence for the translocation of the precursor of protein E3/E2 to the host endoplasmic reticulum. Furin-cleaved E3 remains associated with spike glycoprotein E1 and mediates pH protection of the latter during the transport via the secretory pathway. After virion release from the host cell, the assembly protein E3 is gradually released in the extracellular space. In terms of biological role, plays a role in viral attachment to target host cell, by binding to the cell receptor. Synthesized as a p62 precursor which is processed by furin at the cell membrane just before virion budding, giving rise to E2-E1 heterodimer. The p62-E1 heterodimer is stable, whereas E2-E1 is unstable and dissociate at low pH. p62 is processed at the last step, presumably to avoid E1 fusion activation before its final export to cell surface. E2 C-terminus contains a transitory transmembrane that would be disrupted by palmitoylation, resulting in reorientation of the C-terminal tail from lumenal to cytoplasmic side. This step is critical since E2 C-terminus is involved in budding by interacting with capsid proteins. This release of E2 C-terminus in cytoplasm occurs lately in protein export, and precludes premature assembly of particles at the endoplasmic reticulum membrane. Its function is as follows. Acts as a viroporin that participates in virus glycoprotein processing and transport to the plasma membrane, cell permeabilization and budding of viral particles. Disrupts the calcium homeostasis of the cell, probably at the endoplasmic reticulum level. This leads to cytoplasmic calcium elevation. Because of its lipophilic properties, the 6K protein is postulated to influence the selection of lipids that interact with the transmembrane domains of the glycoproteins, which, in turn, affects the deformability of the bilayer required for the extreme curvature that occurs as budding proceeds. Present in low amount in virions, about 3% compared to viral glycoproteins. Functionally, class II viral fusion protein. Fusion activity is inactive as long as E1 is bound to E2 in mature virion. After virus attachment to target cell and endocytosis, acidification of the endosome induce dissociation of E1/E2 heterodimer and concomitant trimerization of the E1 subunits. This E1 trimer is fusion active, and promotes release of viral nucleocapsid in cytoplasm after endosome and viral membrane fusion. Efficient fusion requires the presence of cholesterol and sphingolipid in the target membrane. This chain is Structural polyprotein, found in Aedes (AURAV).